A 272-amino-acid polypeptide reads, in one-letter code: Putative pyruvate, phosphate dikinase regulatory protein (272 aa).

Position 149–156 (149–156 (GVSRTSKT)) interacts with ADP.

This sequence belongs to the pyruvate, phosphate/water dikinase regulatory protein family. PDRP subfamily.

It carries out the reaction N(tele)-phospho-L-histidyl/L-threonyl-[pyruvate, phosphate dikinase] + ADP = N(tele)-phospho-L-histidyl/O-phospho-L-threonyl-[pyruvate, phosphate dikinase] + AMP + H(+). The enzyme catalyses N(tele)-phospho-L-histidyl/O-phospho-L-threonyl-[pyruvate, phosphate dikinase] + phosphate + H(+) = N(tele)-phospho-L-histidyl/L-threonyl-[pyruvate, phosphate dikinase] + diphosphate. Functionally, bifunctional serine/threonine kinase and phosphorylase involved in the regulation of the pyruvate, phosphate dikinase (PPDK) by catalyzing its phosphorylation/dephosphorylation. In Lactiplantibacillus plantarum (strain ATCC BAA-793 / NCIMB 8826 / WCFS1) (Lactobacillus plantarum), this protein is Putative pyruvate, phosphate dikinase regulatory protein.